Here is an 86-residue protein sequence, read N- to C-terminus: Collagen alpha-1(XII) chain (86 aa).

Residues 1 to 12 (NQPGPPGPPGPP) are compositionally biased toward pro residues. Residues 1 to 86 (NQPGPPGPPG…PGRPGDSGIR (86 aa)) form a disordered region. 14 positions are modified to hydroxyproline: proline 6, proline 9, proline 12, proline 18, proline 24, proline 27, proline 30, proline 42, proline 51, proline 54, proline 65, proline 74, proline 77, and proline 80. Over residues 16 to 25 (GEPGPGGRPG) the composition is skewed to gly residues. Positions 35–50 (PQGERGLPGEXGERGL) are enriched in low complexity. Residues 57 to 71 (QGESRTGPPGSTGSR) show a composition bias toward low complexity.

It belongs to the fibril-associated collagens with interrupted helices (FACIT) family. As to quaternary structure, trimer of identical chains each containing 190 kDa of non-triple-helical sequences. The triple-helical tail is stabilized by disulfide bonds at each end. In terms of processing, prolines at the third position of the tripeptide repeating unit (G-X-Y) are hydroxylated in some or all of the chains.

It localises to the secreted. The protein localises to the extracellular space. Its subcellular location is the extracellular matrix. Its function is as follows. Type XII collagen interacts with type I collagen-containing fibrils, the COL1 domain could be associated with the surface of the fibrils, and the COL2 and NC3 domains may be localized in the perifibrillar matrix. The protein is Collagen alpha-1(XII) chain (COL12A1) of Bos taurus (Bovine).